The sequence spans 333 residues: Ketoreductase sphI (333 aa).

Tyr-167 contributes to the NADP(+) binding site.

It belongs to the NAD(P)-dependent epimerase/dehydratase family. Dihydroflavonol-4-reductase subfamily.

Its function is as follows. Ketoreductase; part of the gene cluster that mediates the biosynthesis of sphingofungins, bioactive molecules acting as sphingolipid inhibitors via inhibiting serine palmitoyl transferase (SPT). Does not seem to be involved in any biosynthetic process leading to the production of sphingofungins, but might be connected to a regulation or resistance mechanism. The polypeptide is Ketoreductase sphI (Aspergillus fumigatus (strain CBS 144.89 / FGSC A1163 / CEA10) (Neosartorya fumigata)).